We begin with the raw amino-acid sequence, 231 residues long: MNKAVVVFSGGQDSTTCLVKALNEFDEVHAITFDYGQRHRLEIEVAQNLAKELGVAAHKVMDVTLLNELAISSLTRDDIPVSHELQENGLPNSFVPGRNILFLTLAGIYAYQIGAQTIITGVCETDFSGYPDCRDDFVKAMNSALVKGMDKPLVIQTPLMWLNKTETWALADQNNALQLVREKTLTCYNGIIGDGCGDCPSCHLRKVGLNDYLDNREAIMASLVEKQHAES.

8-18 provides a ligand contact to ATP; the sequence is FSGGQDSTTCL. Residues C187, C196, C199, and C202 each coordinate Zn(2+).

The protein belongs to the QueC family. Zn(2+) is required as a cofactor.

It carries out the reaction 7-carboxy-7-deazaguanine + NH4(+) + ATP = 7-cyano-7-deazaguanine + ADP + phosphate + H2O + H(+). It functions in the pathway purine metabolism; 7-cyano-7-deazaguanine biosynthesis. In terms of biological role, catalyzes the ATP-dependent conversion of 7-carboxy-7-deazaguanine (CDG) to 7-cyano-7-deazaguanine (preQ(0)). The sequence is that of 7-cyano-7-deazaguanine synthase from Vibrio vulnificus (strain CMCP6).